Consider the following 284-residue polypeptide: RNase adapter protein RapZ (284 aa).

ATP is bound at residue 8-15 (GRSGSGKS). 56–59 (DVRN) is a GTP binding site. An RNA-binding region spans residues 266–284 (RSRGKNVQSRHRTLEKRKT).

It belongs to the RapZ-like family. RapZ subfamily. As to quaternary structure, homotrimer.

In terms of biological role, modulates the synthesis of GlmS, by affecting the processing and stability of the regulatory small RNA GlmZ. When glucosamine-6-phosphate (GlcN6P) concentrations are high in the cell, RapZ binds GlmZ and targets it to cleavage by RNase E. Consequently, GlmZ is inactivated and unable to activate GlmS synthesis. Under low GlcN6P concentrations, RapZ is sequestered and inactivated by an other regulatory small RNA, GlmY, preventing GlmZ degradation and leading to synthesis of GlmS. This is RNase adapter protein RapZ from Salmonella typhi.